The primary structure comprises 371 residues: Zinc transporter ZIP13 (371 aa).

Topologically, residues 1–7 (MPGCPCP) are lumenal. A helical membrane pass occupies residues 8–28 (GCGMAGPRLLFLTALALELLE). Over 29–68 (RAGGSQPALRSRGTATACRLDNKESESWGALLSGERLDTW) the chain is Cytoplasmic. The chain crosses the membrane as a helical span at residues 69–89 (ICSLLGSLMVGLSGVFPLLVI). Over 90-108 (PLEMGTMLRSEAGAWRLKQ) the chain is Lumenal. A helical transmembrane segment spans residues 109–129 (LLSFALGGLLGNVFLHLLPEA). Residues 130–149 (WAYTCSASPGGEGQSLQQQQ) lie on the Cytoplasmic side of the membrane. Residues 150–170 (QLGLWVIAGILTFLALEKMFL) form a helical membrane-spanning segment. At 171–235 (DSKEEGTSQA…TIDNFTHGLA (65 aa)) the chain is on the lumenal side. Residues 236–256 (VAASFLVSKKIGLLTTMAILL) form a helical membrane-spanning segment. Residues 257–262 (HEIPHE) carry the XEXPHE-motif motif. Topologically, residues 257 to 278 (HEIPHEVGDFAILLRAGFDRWS) are cytoplasmic. The helical transmembrane segment at 279–299 (AAKLQLSTALGGLLGAGFAIC) threads the bilayer. Residues 300–316 (TQSPKGVVGCSPAAEET) are Lumenal-facing. Residues 317–337 (AAWVLPFTSGGFLYIALVNVL) traverse the membrane as a helical segment. The Cytoplasmic portion of the chain corresponds to 338–349 (PDLLEEEDPWRS). A helical membrane pass occupies residues 350 to 370 (LQQLLLLCAGIVVMVLFSLFV). A topological domain (lumenal) is located at residue D371.

Belongs to the ZIP transporter (TC 2.A.5) family. In terms of assembly, homodimer.

It localises to the golgi apparatus membrane. The protein resides in the cytoplasmic vesicle membrane. The protein localises to the endoplasmic reticulum membrane. The catalysed reaction is Zn(2+)(in) = Zn(2+)(out). In terms of biological role, functions as a zinc transporter transporting Zn(2+) from the Golgi apparatus to the cytosol and thus influences the zinc level at least in areas of the cytosol. May regulate beige adipocyte differentiation. The chain is Zinc transporter ZIP13 from Homo sapiens (Human).